A 706-amino-acid chain; its full sequence is Maternal embryonic leucine zipper kinase (706 aa).

In terms of domain architecture, Protein kinase spans 11–265 (YAVHDELGSG…VKKLLEHDWL (255 aa)). ATP-binding positions include 17–25 (LGSGGFGKV) and lysine 40. Aspartate 132 serves as the catalytic Proton acceptor. Disordered regions lie at residues 366–386 (LDKS…SSSD), 433–493 (FTGR…SRGP), and 506–555 (SVYT…IGSA). Composition is skewed to polar residues over residues 447–461 (SVRS…SAAT) and 506–515 (SVYTTPNTRP). One can recognise a KA1 domain in the interval 656 to 705 (QETVHGWMTVELEIVRLQMFDKVGIRRKRLKGDAFMYKKVCEKILQMAKI).

Belongs to the protein kinase superfamily. CAMK Ser/Thr protein kinase family. SNF1 subfamily. May be phosphorylated at Thr-169 by par-4 and/or autophosphorylated which likely results in its activation. Phosphorylation is not required for co-localization with the centrosome.

The protein localises to the cytoplasm. It is found in the cytoskeleton. It localises to the microtubule organizing center. The protein resides in the centrosome. It carries out the reaction L-seryl-[protein] + ATP = O-phospho-L-seryl-[protein] + ADP + H(+). The enzyme catalyses L-threonyl-[protein] + ATP = O-phospho-L-threonyl-[protein] + ADP + H(+). Its function is as follows. Serine/threonine-protein kinase involved in cell autonomous neuroblast asymmetric divisions that generate one precursor cell and one apoptotic cell by controlling spindle positioning, myosin distribution and the segregation of cell fate determinants. Plays a role in neural fate specification in several dopaminergic linages, acting in concert with ham-1. Involved in phosphorylation of multiple proteins associated with key developmental processes, including the cell cycle, apoptosis, endocytosis, and asymmetric cell division. Promotes cell shedding during embryogenesis, probably through the endocytosis-mediated removal of cell adhesion molecules such as hmp-1 from the cell surface. May act downstream of par-4/strd-1/mop-25 to regulate cell shedding. The sequence is that of Maternal embryonic leucine zipper kinase from Caenorhabditis elegans.